A 601-amino-acid polypeptide reads, in one-letter code: Probable HECT-type ubiquitin ligase-interacting protein creD (601 aa).

2 disordered regions span residues 374-397 (EVDP…GTLS) and 455-489 (SADY…DHDH). Low complexity predominate over residues 461 to 473 (PSSGSNSHSPASP). Residues 475-489 (LSRRPSDEGYHDHDH) show a composition bias toward basic and acidic residues.

Belongs to the arrestin family. Interacts with hulA.

Functionally, component of the regulatory network controlling carbon source utilization through ubiquitination and deubiquitination involving creA, creB, creC, creD and acrB. May be involved in signaling by recognizing appropriately phosphorylated substrates via its arrestin domains and then recruit a HECT-type ubiquitin ligase such as hulA, leading to ubiquitination of the substrate, providing a link between ubiquitination and phosphorylation in protein regulation and stability. This Neosartorya fischeri (strain ATCC 1020 / DSM 3700 / CBS 544.65 / FGSC A1164 / JCM 1740 / NRRL 181 / WB 181) (Aspergillus fischerianus) protein is Probable HECT-type ubiquitin ligase-interacting protein creD (creD).